A 154-amino-acid polypeptide reads, in one-letter code: D-aminoacyl-tRNA deacylase (154 aa).

Residues 142–143 (GP) carry the Gly-cisPro motif, important for rejection of L-amino acids motif.

This sequence belongs to the DTD family. In terms of assembly, homodimer.

The protein localises to the cytoplasm. The catalysed reaction is glycyl-tRNA(Ala) + H2O = tRNA(Ala) + glycine + H(+). The enzyme catalyses a D-aminoacyl-tRNA + H2O = a tRNA + a D-alpha-amino acid + H(+). Functionally, an aminoacyl-tRNA editing enzyme that deacylates mischarged D-aminoacyl-tRNAs. Also deacylates mischarged glycyl-tRNA(Ala), protecting cells against glycine mischarging by AlaRS. Acts via tRNA-based rather than protein-based catalysis; rejects L-amino acids rather than detecting D-amino acids in the active site. By recycling D-aminoacyl-tRNA to D-amino acids and free tRNA molecules, this enzyme counteracts the toxicity associated with the formation of D-aminoacyl-tRNA entities in vivo and helps enforce protein L-homochirality. This Yarrowia lipolytica (strain CLIB 122 / E 150) (Yeast) protein is D-aminoacyl-tRNA deacylase (DTD1).